A 431-amino-acid polypeptide reads, in one-letter code: Beta-lactamase hydrolase-like protein (431 aa).

Zn(2+) is bound by residues His-212, His-214, and His-286. Residue Asp-309 participates in substrate binding.

The protein belongs to the metallo-beta-lactamase superfamily. Zn(2+) serves as cofactor.

In terms of biological role, could play a role in cell adherence or biofilm development. The chain is Beta-lactamase hydrolase-like protein from Agrobacterium fabrum (strain C58 / ATCC 33970) (Agrobacterium tumefaciens (strain C58)).